A 279-amino-acid chain; its full sequence is Phospholipase A and acyltransferase 5 (279 aa).

Disordered regions lie at residues 1 to 53 (MGLS…GLNS) and 70 to 117 (QLPA…ENEG). The segment covering 97–106 (LETTPSQKAD) has biased composition (polar residues). The LRAT domain occupies 135–249 (LIEIFRIGYE…LRYGVPRSQQ (115 aa)). Active-site residues include His145 and His157. The Acyl-thioester intermediate role is filled by Cys233.

It belongs to the H-rev107 family. Highest expression level in testis and pancreas.

The protein localises to the cytoplasm. It localises to the cytosol. The catalysed reaction is a 1,2-diacyl-sn-glycero-3-phosphocholine + H2O = a 1-acyl-sn-glycero-3-phosphocholine + a fatty acid + H(+). It carries out the reaction a 1,2-diacyl-sn-glycero-3-phosphocholine + H2O = a 2-acyl-sn-glycero-3-phosphocholine + a fatty acid + H(+). It catalyses the reaction 1-hexadecanoyl-2-(5Z,8Z,11Z,14Z-eicosatetraenoyl)-sn-glycero-3-phosphocholine + 1,2-di-(9Z-octadecenoyl)-sn-glycero-3-phosphoethanolamine = N-(5Z,8Z,11Z,14Z-eicosatetraenoyl)-1,2-di-(9Z-octadecenoyl)-sn-glycero-3-phosphoethanolamine + 1-hexadecanoyl-sn-glycero-3-phosphocholine + H(+). The enzyme catalyses 1,2-di-(9Z-octadecenoyl)-sn-glycero-3-phosphoethanolamine + 1,2-dihexadecanoyl-sn-glycero-3-phosphocholine = N-hexadecanoyl-1,2-di-(9Z-octadecenoyl)-sn-glycero-3-phosphoethanolamine + 1-hexadecanoyl-sn-glycero-3-phosphocholine + H(+). The catalysed reaction is 1,2-di-(9Z-octadecenoyl)-sn-glycero-3-phosphoethanolamine + 1,2-dihexadecanoyl-sn-glycero-3-phosphocholine = N-hexadecanoyl-1,2-di-(9Z-octadecenoyl)-sn-glycero-3-phosphoethanolamine + 2-hexadecanoyl-sn-glycero-3-phosphocholine + H(+). It carries out the reaction a 1,2-diacyl-sn-glycero-3-phosphoethanolamine + a 1,2-diacyl-sn-glycero-3-phosphocholine = an N-acyl-1,2-diacyl-sn-glycero-3-phosphoethanolamine + a 1-acyl-sn-glycero-3-phosphocholine + H(+). It catalyses the reaction a 1,2-diacyl-sn-glycero-3-phosphoethanolamine + a 1,2-diacyl-sn-glycero-3-phosphocholine = an N-acyl-1,2-diacyl-sn-glycero-3-phosphoethanolamine + a 2-acyl-sn-glycero-3-phosphocholine + H(+). The enzyme catalyses 1-hexadecanoyl-2-(9Z-octadecenoyl)-sn-glycero-3-phosphocholine + 1,2-di-(9Z-octadecenoyl)-sn-glycero-3-phosphoethanolamine = N,1,2-tri-(9Z-octadecenoyl)-sn-glycero-3-phosphoethanolamine + 1-hexadecanoyl-sn-glycero-3-phosphocholine + H(+). In terms of biological role, exhibits both phospholipase A1/2 and acyltransferase activities. Shows phospholipase A1 (PLA1) and A2 (PLA2) activity, catalyzing the calcium-independent release of fatty acids from the sn-1 or sn-2 position of glycerophospholipids. Shows N-acyltransferase activity, catalyzing the calcium-independent transfer of a fatty acyl group at the sn-1 position of phosphatidylcholine (PC) and other glycerophospholipids to the primary amine of phosphatidylethanolamine (PE), forming N-acylphosphatidylethanolamine (NAPE), which serves as precursor for N-acylethanolamines (NAEs). The protein is Phospholipase A and acyltransferase 5 of Homo sapiens (Human).